Here is a 131-residue protein sequence, read N- to C-terminus: Bacteriohemerythrin (131 aa).

Residues histidine 22, histidine 58, glutamate 62, histidine 77, histidine 81, histidine 117, and aspartate 122 each coordinate Fe cation.

This sequence belongs to the hemerythrin family. As to quaternary structure, monomer.

Functionally, oxygen-binding protein. May be involved in a storage mechanism or for delivery to oxygen-requiring enzymes. The oxygen-binding site contains two iron atoms. The polypeptide is Bacteriohemerythrin (Methylococcus capsulatus (strain ATCC 33009 / NCIMB 11132 / Bath)).